Reading from the N-terminus, the 185-residue chain is UPF0669 protein C6orf120 homolog (185 aa).

A signal peptide spans 1 to 23; it reads MAARWRRILIVFVAAQVLCLVNT. A glycan (N-linked (GlcNAc...) asparagine) is linked at N47.

This sequence belongs to the UPF0669 family.

The protein localises to the secreted. This Gallus gallus (Chicken) protein is UPF0669 protein C6orf120 homolog.